The primary structure comprises 109 residues: U26-theraphotoxin-Cg1b (109 aa).

Residues 1–18 form the signal peptide; it reads MNTIIPLLLLSLLITVYA. The propeptide occupies 19 to 67; the sequence is YALEDGNKEEMQDIAESEFEASNEMLQLAHLLEADRAETEEDRNSRQKR. 3 cysteine pairs are disulfide-bonded: Cys68–Cys83, Cys75–Cys88, and Cys82–Cys103.

The protein belongs to the neurotoxin 14 (magi-1) family. 07 (Jztx-56) subfamily. Expressed by the venom gland.

It localises to the secreted. Probable ion channel inhibitor. The polypeptide is U26-theraphotoxin-Cg1b (Chilobrachys guangxiensis (Chinese earth tiger tarantula)).